We begin with the raw amino-acid sequence, 268 residues long: Inositol monophosphatase 3 (268 aa).

Glu-71, Asp-91, Leu-93, and Asp-94 together coordinate Mg(2+). Residue Glu-71 coordinates substrate. Substrate-binding positions include Leu-93–Thr-96, Gly-194–Cys-196, Glu-213, and Asp-221. Asp-221 lines the Mg(2+) pocket.

The protein belongs to the inositol monophosphatase superfamily. Requires Mg(2+) as cofactor. As to expression, expressed in the shoot apex, roots, stems, leaves, flowers and young and mature green fruits.

It carries out the reaction a myo-inositol phosphate + H2O = myo-inositol + phosphate. It participates in polyol metabolism; myo-inositol biosynthesis; myo-inositol from D-glucose 6-phosphate: step 2/2. In terms of biological role, responsible for the provision of inositol required for synthesis of phosphatidylinositol and polyphosphoinositides. The polypeptide is Inositol monophosphatase 3 (IMP3) (Solanum lycopersicum (Tomato)).